The primary structure comprises 3726 residues: Zinc finger homeobox protein 3 (3726 aa).

Disordered stretches follow at residues M1–V79 and M95–L129. The C2H2-type 1 zinc finger occupies V79–H103. Acidic residues predominate over residues T116–V126. The C2H2-type 2 zinc-finger motif lies at L282 to H305. Positions S417–A557 are disordered. S426 carries the post-translational modification Phosphoserine. T428 carries the phosphothreonine modification. Residues S431–P459 are compositionally biased toward basic and acidic residues. Acidic residues-rich tracts occupy residues A460–E491 and D500–S510. The segment covering S528–A557 has biased composition (polar residues). Phosphoserine occurs at positions 535 and 573. Residues D590 to H621 are disordered. 3 C2H2-type zinc fingers span residues V641–H664, L672–H695, and F727–H751. The segment at W805 to H829 adopts a C2H2-type 6; atypical zinc-finger fold. Residues F946–E969 form a C2H2-type 7; degenerate zinc finger. The C2H2-type 8; atypical zinc-finger motif lies at Y985–H1009. The segment at L1041 to H1065 adopts a C2H2-type 9; atypical zinc-finger fold. The C2H2-type 10; atypical zinc-finger motif lies at Y1089–H1113. Residues L1125–K1228 are disordered. Residues D1149 to G1159 show a composition bias toward acidic residues. 2 stretches are compositionally biased toward polar residues: residues G1175–Q1191 and S1199–S1217. S1207 carries the post-translational modification Phosphoserine. The C2H2-type 11; atypical zinc finger occupies Y1233–H1256. A C2H2-type 12 zinc finger spans residues L1262–H1285. A disordered region spans residues D1320 to P1361. 3 C2H2-type zinc fingers span residues F1370–H1395, Y1411–H1433, and T1439–H1462. The segment at E1500–K1539 is disordered. A compositionally biased stretch (polar residues) spans S1514–D1526. The C2H2-type 16 zinc finger occupies Y1555 to H1579. The residue at position 1600 (S1600) is a Phosphoserine. The C2H2-type 17 zinc-finger motif lies at F1606–H1630. Disordered stretches follow at residues L1639 to N1678, N1706 to Q1738, and L1866 to A1943. Positions S1643 to G1669 are enriched in low complexity. The segment covering E1717–A1727 has biased composition (basic and acidic residues). Residues L1866–Q1878 show a composition bias toward low complexity. The segment covering H1879–P1902 has biased composition (basic and acidic residues). The C2H2-type 18 zinc-finger motif lies at L1990–H2013. Disordered stretches follow at residues Y2037–S2089 and N2211–K2249. The segment covering P2041–A2066 has biased composition (pro residues). A DNA-binding region (homeobox 1) is located at residues N2152–N2211. Positions S2214–I2223 are enriched in polar residues. Residues K2249 to Y2308 constitute a DNA-binding region (homeobox 2). A C2H2-type 19; atypical zinc finger spans residues Y2335–C2358. K2356 participates in a covalent cross-link: Glycyl lysine isopeptide (Lys-Gly) (interchain with G-Cter in SUMO1). Disordered regions lie at residues T2383–A2405 and N2429–L2529. Residues Q2458–Q2478 show a composition bias toward low complexity. Pro residues predominate over residues P2479 to S2507. Over residues P2508 to L2521 the composition is skewed to low complexity. Residues Y2539–H2561 form a C2H2-type 20 zinc finger. The Nuclear localization signal signature appears at K2624 to K2626. Positions E2628 to T2656 are disordered. S2634 is subject to Phosphoserine. Residues D2650 to Q2709 constitute a DNA-binding region (homeobox 3). A C2H2-type 21 zinc finger spans residues R2720–H2743. A compositionally biased stretch (polar residues) spans S2780–G2789. The interval S2780–P2805 is disordered. 2 positions are modified to phosphoserine: S2795 and S2804. K2815 participates in a covalent cross-link: Glycyl lysine isopeptide (Lys-Gly) (interchain with G-Cter in SUMO1); alternate. K2815 is covalently cross-linked (Glycyl lysine isopeptide (Lys-Gly) (interchain with G-Cter in SUMO2); alternate). Residues A2850–S2877 are disordered. A phosphoserine mark is found at S2900 and S2904. The disordered stretch occupies residues V2920–K2955. A compositionally biased stretch (low complexity) spans A2929 to K2944. The homeobox 4 DNA-binding region spans P2952–K3011. The C2H2-type 22 zinc-finger motif lies at T3032–H3056. 2 disordered regions span residues F3145 to G3274 and Q3415 to A3476. A compositionally biased stretch (polar residues) spans P3147–K3156. A compositionally biased stretch (low complexity) spans P3181–A3199. Positions P3200–A3221 are enriched in pro residues. Positions A3222 to Q3234 are enriched in low complexity. Over residues Q3235 to E3267 the composition is skewed to basic and acidic residues. Residue K3262 forms a Glycyl lysine isopeptide (Lys-Gly) (interchain with G-Cter in SUMO1) linkage. Residue S3434 is modified to Phosphoserine. Residues P3435–P3453 show a composition bias toward basic and acidic residues. Residue S3457 is modified to Phosphoserine. The C2H2-type 23 zinc-finger motif lies at Y3552–H3576. The interval A3588–L3726 is disordered. Low complexity-rich tracts occupy residues S3605–D3618 and S3645–S3677. Residue S3616 is modified to Phosphoserine. S3700 is modified (phosphoserine). A compositionally biased stretch (polar residues) spans G3715–L3726.

In terms of assembly, interacts with ALKBH4 and PIAS3. Interacts with FNBP3. Interacts with ESR1, RUNX3, TRIM25, SMAD2 and SMAD3. Phosphorylated at Ser-2634 in both embryonic and adult brain. Phosphorylation at Ser-1600, Ser-2795, Ser-2804, Ser-2900, Ser-3434, Ser-3616 and Ser-3700 is restricted to the embryonic brain. Hyperphosphorylation in embryonic brain protects ZFHX3 from calpain/CAPN1-mediated degradation. In terms of processing, ubiquitinated, leading to its proteasomal degradation. Post-translationally, nuclear localization is essential for its sumoylation. Expressed in suprachiasmatic nucleus (SCN) of the brain (at protein level). Expressed in skeletal muscle. Levels of expression are high in myoblasts but low in differentiated muscle. Expressed in the heart, primarily in the atria.

Its subcellular location is the nucleus. It localises to the cytoplasm. Its function is as follows. Transcriptional regulator which can act as an activator or a repressor. Inhibits the enhancer element of the AFP gene by binding to its AT-rich core sequence. In concert with SMAD-dependent TGF-beta signaling can repress the transcription of AFP via its interaction with SMAD2/3. Regulates the circadian locomotor rhythms via transcriptional activation of neuropeptidergic genes which are essential for intercellular synchrony and rhythm amplitude in the suprachiasmatic nucleus (SCN) of the brain. Regulator of myoblasts differentiation through the binding to the AT-rich sequence of MYF6 promoter and promoter repression. Down-regulates the MUC5AC promoter in gastric cancer. In association with RUNX3, up-regulates CDKN1A promoter activity following TGF-beta stimulation. The chain is Zinc finger homeobox protein 3 (Zfhx3) from Mus musculus (Mouse).